We begin with the raw amino-acid sequence, 281 residues long: 2-dehydro-3-deoxyphosphooctonate aldolase (281 aa).

The protein belongs to the KdsA family.

It localises to the cytoplasm. The enzyme catalyses D-arabinose 5-phosphate + phosphoenolpyruvate + H2O = 3-deoxy-alpha-D-manno-2-octulosonate-8-phosphate + phosphate. Its pathway is carbohydrate biosynthesis; 3-deoxy-D-manno-octulosonate biosynthesis; 3-deoxy-D-manno-octulosonate from D-ribulose 5-phosphate: step 2/3. The protein operates within bacterial outer membrane biogenesis; lipopolysaccharide biosynthesis. The sequence is that of 2-dehydro-3-deoxyphosphooctonate aldolase from Pseudomonas fluorescens (strain ATCC BAA-477 / NRRL B-23932 / Pf-5).